We begin with the raw amino-acid sequence, 60 residues long: Protein translocase subunit SecE (60 aa).

Residues 31–51 (IIVVSTVIFFLVFFYALDIGI) form a helical membrane-spanning segment.

It belongs to the SecE/SEC61-gamma family. As to quaternary structure, component of the Sec protein translocase complex. Heterotrimer consisting of SecY, SecE and SecG subunits. The heterotrimers can form oligomers, although 1 heterotrimer is thought to be able to translocate proteins. Interacts with the ribosome. Interacts with SecDF, and other proteins may be involved. Interacts with SecA.

The protein resides in the cell membrane. In terms of biological role, essential subunit of the Sec protein translocation channel SecYEG. Clamps together the 2 halves of SecY. May contact the channel plug during translocation. In Staphylococcus epidermidis (strain ATCC 35984 / DSM 28319 / BCRC 17069 / CCUG 31568 / BM 3577 / RP62A), this protein is Protein translocase subunit SecE.